The primary structure comprises 515 residues: MSLTIPSPIAATTPSAASMTAGEPKTYQVRTFGCQMNVHDSERMAGLLEEAGYVPADGEVADVVVFNTCAVRENADNKLYGNLGQLRQVKEANPGMQIAVGGCLAQKDRETIVKKAPWVDAVFGTHNVGALPALLNRARHNNEAQLEILESLDVFPSTLPTKRDSVYAGWVSISVGCNNTCTFCIVPSLRGKEKDRRPGEILAEIQALVDDGAVEVTLLGQNVNSYGVEFGDRQAFSKLLRACGEIEGLERVRFTSPHPAAFTDDVIDAMAETHNAMPQLHMPLQSGSDKVLKDMRRSYRSSKFLGILDKVRDRIPHAAITTDIIVGFPGETEEDFQATLDVVEKSRFASAFTFQYSKRPGTPAADLPEQLPKAVVQERYERLTALQDRIAAEENAKQLGRKVEVLVTAQSGRKAGETHRLSGRSKDQRLVHFSVPAGAEAPRPGDFVTVTITEAAAFHLVADPAGADDYLLRRSRAGDAWDRSQADSCGVPAAGAASGKAGVSLGMPSLPTRRA.

Residues 25–140 (KTYQVRTFGC…LPALLNRARH (116 aa)) form the MTTase N-terminal domain. 6 residues coordinate [4Fe-4S] cluster: C34, C69, C103, C177, C181, and C184. The Radical SAM core domain occupies 163 to 393 (RDSVYAGWVS…TALQDRIAAE (231 aa)). Residues 396-466 (AKQLGRKVEV…AFHLVADPAG (71 aa)) form the TRAM domain. The interval 482–515 (DRSQADSCGVPAAGAASGKAGVSLGMPSLPTRRA) is disordered. Low complexity predominate over residues 490–506 (GVPAAGAASGKAGVSLG).

It belongs to the methylthiotransferase family. MiaB subfamily. Monomer. Requires [4Fe-4S] cluster as cofactor.

The protein resides in the cytoplasm. It carries out the reaction N(6)-dimethylallyladenosine(37) in tRNA + (sulfur carrier)-SH + AH2 + 2 S-adenosyl-L-methionine = 2-methylsulfanyl-N(6)-dimethylallyladenosine(37) in tRNA + (sulfur carrier)-H + 5'-deoxyadenosine + L-methionine + A + S-adenosyl-L-homocysteine + 2 H(+). In terms of biological role, catalyzes the methylthiolation of N6-(dimethylallyl)adenosine (i(6)A), leading to the formation of 2-methylthio-N6-(dimethylallyl)adenosine (ms(2)i(6)A) at position 37 in tRNAs that read codons beginning with uridine. This is tRNA-2-methylthio-N(6)-dimethylallyladenosine synthase from Paenarthrobacter aurescens (strain TC1).